A 1591-amino-acid chain; its full sequence is Dicer-like protein 1 (1591 aa).

2 stretches are compositionally biased toward basic and acidic residues: residues 1 to 20 (MEVHDGLKSPDKAAKSRYDD) and 41 to 52 (SKPRKISERKRA). The tract at residues 1–52 (MEVHDGLKSPDKAAKSRYDDDRIDQDSEDEAVRLVANPDPSKPRKISERKRA) is disordered. One can recognise a Helicase ATP-binding domain in the interval 115–298 (LFERAKQKNT…SYERATHELE (184 aa)). 128-135 (LDTGTGKT) serves as a coordination point for ATP. Positions 242–245 (DEAH) match the DEAH box motif. The region spanning 439 to 607 (KLIEILAECF…CLSLPKDRIM (169 aa)) is the Helicase C-terminal domain. In terms of domain architecture, Dicer dsRNA-binding fold spans 639-729 (SLVVLAEFVA…KSTLAKVLPA (91 aa)). The PAZ domain occupies 888–1012 (TTTDRVPYNF…LVLETLLISQ (125 aa)). 2 RNase III domains span residues 1050–1190 (IDIA…LTAQ) and 1243–1406 (CSQI…VDTG). Residues Glu1283, Asp1392, and Glu1395 each coordinate Mg(2+). In terms of domain architecture, DRBM spans 1440–1514 (THITSIITTQ…AKQAVAIYED (75 aa)). The Zn(2+) site is built by Cys1452, His1485, Cys1526, and Cys1528.

Belongs to the helicase family. Dicer subfamily. Mg(2+) serves as cofactor. The cofactor is Mn(2+).

Functionally, dicer-like endonuclease which seems not to be involved in cleaving double-stranded RNA in the RNA interference (RNAi) pathway, contrary to its DCL2 counterpart. In Pyricularia oryzae (strain 70-15 / ATCC MYA-4617 / FGSC 8958) (Rice blast fungus), this protein is Dicer-like protein 1 (DCL1).